The chain runs to 348 residues: Succinylglutamate desuccinylase (348 aa).

H67, E70, and H164 together coordinate Zn(2+). E228 is an active-site residue.

This sequence belongs to the AspA/AstE family. Succinylglutamate desuccinylase subfamily. Zn(2+) is required as a cofactor.

It catalyses the reaction N-succinyl-L-glutamate + H2O = L-glutamate + succinate. The protein operates within amino-acid degradation; L-arginine degradation via AST pathway; L-glutamate and succinate from L-arginine: step 5/5. Transforms N(2)-succinylglutamate into succinate and glutamate. This chain is Succinylglutamate desuccinylase, found in Shewanella denitrificans (strain OS217 / ATCC BAA-1090 / DSM 15013).